The sequence spans 112 residues: MDWLKNTTIVVLFSHSTDKSNKHKKRQVQCNMRKNTLDMVTIGIACLVGVYTGTRFFEPIVIDRLRKDGNLRTDIPIPEYDEDGNLLKVTPSLSSTPAAPPTPPTPPTPPQQ.

Residues 35-57 traverse the membrane as a helical segment; the sequence is NTLDMVTIGIACLVGVYTGTRFF. Positions 82–112 are disordered; it reads EDGNLLKVTPSLSSTPAAPPTPPTPPTPPQQ. Pro residues predominate over residues 98–112; it reads AAPPTPPTPPTPPQQ.

Its subcellular location is the mitochondrion membrane. Functionally, may be involved in cell wall organization and biogenesis. This Saccharomyces cerevisiae (strain ATCC 204508 / S288c) (Baker's yeast) protein is Protein ECM19 (ECM19).